The chain runs to 99 residues: DNA-binding protein HU (99 aa).

This sequence belongs to the bacterial histone-like protein family. In terms of assembly, homodimer.

Its function is as follows. Histone-like DNA-binding protein which is capable of wrapping DNA to stabilize it, and thus to prevent its denaturation under extreme environmental conditions. This chain is DNA-binding protein HU (hup), found in Rickettsia typhi (strain ATCC VR-144 / Wilmington).